We begin with the raw amino-acid sequence, 332 residues long: Spherulin-4 (332 aa).

The first 22 residues, 1–22 (MNIKIVVLVIFAILLGSALAWH), serve as a signal peptide directing secretion. Positions 26 to 60 (HHNPTKAPTEAPHRGGGGGGGHNTPAPTQPPRQNT) are disordered.

The protein is Spherulin-4 of Physarum polycephalum (Slime mold).